The following is a 151-amino-acid chain: Copper transporter 3 (151 aa).

Transmembrane regions (helical) follow at residues 52 to 72 (LKMYWVCLAVIFVISAFSECL) and 103 to 123 (YLVMLAVMSFNGGVFVAAMAG).

This sequence belongs to the copper transporter (Ctr) (TC 1.A.56) family. SLC31A subfamily. In terms of tissue distribution, highly expressed in stems and at lower levels in leaves and flowers.

It localises to the membrane. In terms of biological role, involved in the transport of copper. The polypeptide is Copper transporter 3 (COPT3) (Arabidopsis thaliana (Mouse-ear cress)).